The sequence spans 277 residues: Uridine-cytidine kinase 1 (277 aa).

Positions methionine 1–glutamate 10 are enriched in gly residues. The tract at residues methionine 1 to serine 29 is disordered. Glycine 30–threonine 38 contacts ATP. Residues aspartate 87, tyrosine 115, histidine 120, arginine 169, arginine 178, and glutamine 186 each coordinate substrate. Aspartate 215 contacts ATP. Residues arginine 246–histidine 277 are disordered. Threonine 251 bears the Phosphothreonine mark. Positions serine 268 to histidine 277 are enriched in basic and acidic residues.

This sequence belongs to the uridine kinase family.

It carries out the reaction uridine + ATP = UMP + ADP + H(+). The catalysed reaction is cytidine + ATP = CMP + ADP + H(+). It participates in pyrimidine metabolism; CTP biosynthesis via salvage pathway; CTP from cytidine: step 1/3. The protein operates within pyrimidine metabolism; UMP biosynthesis via salvage pathway; UMP from uridine: step 1/1. Its function is as follows. Phosphorylates uridine and cytidine to uridine monophosphate and cytidine monophosphate. Does not phosphorylate deoxyribonucleosides or purine ribonucleosides. Can use ATP or GTP as a phosphate donor. This Bos taurus (Bovine) protein is Uridine-cytidine kinase 1 (UCK1).